Here is a 753-residue protein sequence, read N- to C-terminus: Inactive protein-tyrosine phosphatase egg-5 (753 aa).

Disordered regions lie at residues 26–46 (TSLQ…STDN) and 77–116 (RKKV…YAAP). A compositionally biased stretch (low complexity) spans 35 to 46 (NTDDSSADSTDN). A compositionally biased stretch (basic and acidic residues) spans 84–94 (AQKDRRSKERL). The 254-residue stretch at 408 to 661 (MERRFEILEN…IFVHRLVAFF (254 aa)) folds into the Tyrosine-protein phosphatase domain.

It belongs to the protein-tyrosine phosphatase family. In terms of assembly, part of a complex, consisting of pseudophosphatases egg-3, egg-4, egg-5 and kinase mbk-2; this complex is required for the oocyte-to-zygote transition. Interacts (via tyrosine-protein phosphatase domain) with kinase mbk-2 (via 'Tyr-619' and 'Tyr-621'); mbk-2 tyrosine phosphorylation enhances the interaction.

It is found in the cytoplasm. Its subcellular location is the cell cortex. In terms of biological role, inactive phosphatase which acts redundantly with egg-4 in the oocyte-to-zygote transition. Required for polarized cortical actin cytoskeleton rearrangement in the oocyte before and after fertilization. Together with egg-4, required for the cortical localization of kinase mbk-2 in maturing oocyte until the end of meiosis I. Also required for kinase mbk-2, pseudophosphatase egg-3 and chitin synthase chs-1 localization to cytoplasmic foci after fertilization. This is Inactive protein-tyrosine phosphatase egg-5 from Caenorhabditis elegans.